The chain runs to 262 residues: Intercellular adhesion molecule 4 (262 aa).

The first 22 residues, 1-22, serve as a signal peptide directing secretion; it reads MESALLLPSLLLVAAYPRGGSP. Residues 23 to 231 are Extracellular-facing; the sequence is QQEWMQSPPA…LTVLALSPAS (209 aa). Ig-like C2-type domains are found at residues 54-116 and 138-209; these read GGSA…TREA and GHKY…LNLD. N-linked (GlcNAc...) asparagine glycans are attached at residues asparagine 60, asparagine 84, and asparagine 182. 4 cysteine pairs are disulfide-bonded: cysteine 61–cysteine 105, cysteine 61–cysteine 109, cysteine 65–cysteine 109, and cysteine 145–cysteine 202. A helical transmembrane segment spans residues 232 to 252; the sequence is IALASTSIATLVGILLAVGAV. The Cytoplasmic segment spans residues 253–262; it reads YVRKYLAVQT.

The protein belongs to the immunoglobulin superfamily. ICAM family.

Its subcellular location is the cell membrane. It is found in the secreted. Its function is as follows. Adhesion molecule that binds to leukocyte adhesion LFA-1 protein LFA-1 (integrin alpha-L/beta-2). ICAM4 is also a ligand for alpha-4/beta-1 and alpha-V integrins. Isoform 2 may modulate binding of membrane-associated ICAM4. This is Intercellular adhesion molecule 4 (Icam4) from Mus musculus (Mouse).